The sequence spans 106 residues: ATP-dependent Clp protease adapter protein ClpS (106 aa).

This sequence belongs to the ClpS family. Binds to the N-terminal domain of the chaperone ClpA.

Its function is as follows. Involved in the modulation of the specificity of the ClpAP-mediated ATP-dependent protein degradation. This chain is ATP-dependent Clp protease adapter protein ClpS, found in Pseudoalteromonas atlantica (strain T6c / ATCC BAA-1087).